A 627-amino-acid chain; its full sequence is Pentatricopeptide repeat-containing protein At2g35030, mitochondrial (627 aa).

A mitochondrion-targeting transit peptide spans 1–44 (MQSRALSRLRSYYKRSSVFPSSDNDRSVQLFNLVRSIYSSSSRP). PPR repeat units follow at residues 45-75 (RVPQ…LPER), 76-110 (DVVT…KNVV), 111-138 (TWTA…MPER), 139-173 (NVVS…NIVS), 174-200 (WNSM…MPRR), 201-235 (DVVS…NIIS), 236-262 (WNAM…MPER), 263-293 (DFAS…MPEK), 294-328 (NVIS…GSVK), 330-360 (NVGT…ISKS), 365-396 (NEIV…LVCQ), 398-432 (DLIS…GFKP), 433-467 (SAVT…ESLP), and 469-499 (REEH…DDAR). The segment at 504-579 (FYGAILSACN…QPGCSWVKVG (76 aa)) is type E motif. Residues 580 to 610 (KQNHLFVVGDKSHPQFEALDSILSDLRNKMR) form a type E(+) motif region.

Belongs to the PPR family. PCMP-E subfamily.

It is found in the mitochondrion. In Arabidopsis thaliana (Mouse-ear cress), this protein is Pentatricopeptide repeat-containing protein At2g35030, mitochondrial (PCMP-E15).